Consider the following 439-residue polypeptide: Proline--tRNA ligase (439 aa).

Belongs to the class-II aminoacyl-tRNA synthetase family. ProS type 2 subfamily. As to quaternary structure, homodimer.

The protein resides in the cytoplasm. The enzyme catalyses tRNA(Pro) + L-proline + ATP = L-prolyl-tRNA(Pro) + AMP + diphosphate. In terms of biological role, catalyzes the attachment of proline to tRNA(Pro) in a two-step reaction: proline is first activated by ATP to form Pro-AMP and then transferred to the acceptor end of tRNA(Pro). This chain is Proline--tRNA ligase, found in Rhodopseudomonas palustris (strain BisB5).